The sequence spans 396 residues: MIISAASDYRAAAQRTLPPFLFHYIDGGAYAEYTLRRNVEDLSQVALRQRVLKNMSDLSLETPLFNETLSMPVALAPVGLCGMYARRGEVQAAAAADAKGIPFTLSTVSVCPIEEVAPTIKRPMWFQLYVLRDRGFMRNALERAKAAGCSTLVFTVDMPTPGARYRDAHSGMSGPNAAMRRYWQAVMHPKWAWDVGLNGRPHDLGNISAYLGKPTGLEDYIGWLANNFDPSISWKDLEWIREFWDGPMVIKGILDPEDARDAVRFGADGIVVSNHGGRQLDGVLSSARALPAIADAVKGDIAILADSGIRNGLDVVRMIALGADTVLLGRAYLYALATAGKAGVANLLDLIEKEMKVAMTLTGAKSISEISGDSLVQELGKSLPTALAPMSKGDAA.

The region spanning 1–380 (MIISAASDYR…SGDSLVQELG (380 aa)) is the FMN hydroxy acid dehydrogenase domain. Tyr-24 provides a ligand contact to substrate. Positions 106 and 127 each coordinate FMN. Residue Tyr-129 participates in substrate binding. Residue Thr-155 coordinates FMN. Residue Arg-164 coordinates substrate. Lys-251 lines the FMN pocket. Catalysis depends on His-275, which acts as the Proton acceptor. Arg-278 is a substrate binding site. Residue 306-330 (DSGIRNGLDVVRMIALGADTVLLGR) participates in FMN binding.

This sequence belongs to the FMN-dependent alpha-hydroxy acid dehydrogenase family. Requires FMN as cofactor.

Its subcellular location is the cell inner membrane. It carries out the reaction (S)-lactate + A = pyruvate + AH2. In terms of biological role, catalyzes the conversion of L-lactate to pyruvate. Is coupled to the respiratory chain. This is L-lactate dehydrogenase from Salmonella newport (strain SL254).